Here is an 803-residue protein sequence, read N- to C-terminus: Leucine--tRNA ligase (803 aa).

Positions 40-51 match the 'HIGH' region motif; sequence PYPSGAGLHVGH. The 'KMSKS' region motif lies at 575 to 579; that stretch reads KMSKS. Lys-578 lines the ATP pocket.

Belongs to the class-I aminoacyl-tRNA synthetase family.

It is found in the cytoplasm. It catalyses the reaction tRNA(Leu) + L-leucine + ATP = L-leucyl-tRNA(Leu) + AMP + diphosphate. The chain is Leucine--tRNA ligase from Listeria monocytogenes serotype 4b (strain F2365).